The primary structure comprises 331 residues: Biotin synthase (331 aa).

The 231-residue stretch at 48–278 (FDSQKFEFCS…SAELRLCGGR (231 aa)) folds into the Radical SAM core domain. [4Fe-4S] cluster-binding residues include C66, C70, and C73. [2Fe-2S] cluster-binding residues include C110, C143, C203, and R273.

This sequence belongs to the radical SAM superfamily. Biotin synthase family. Homodimer. It depends on [4Fe-4S] cluster as a cofactor. Requires [2Fe-2S] cluster as cofactor.

The catalysed reaction is (4R,5S)-dethiobiotin + (sulfur carrier)-SH + 2 reduced [2Fe-2S]-[ferredoxin] + 2 S-adenosyl-L-methionine = (sulfur carrier)-H + biotin + 2 5'-deoxyadenosine + 2 L-methionine + 2 oxidized [2Fe-2S]-[ferredoxin]. The protein operates within cofactor biosynthesis; biotin biosynthesis; biotin from 7,8-diaminononanoate: step 2/2. Its function is as follows. Catalyzes the conversion of dethiobiotin (DTB) to biotin by the insertion of a sulfur atom into dethiobiotin via a radical-based mechanism. This chain is Biotin synthase, found in Hydrogenobaculum sp. (strain Y04AAS1).